Reading from the N-terminus, the 629-residue chain is ATP-dependent DNA helicase II subunit 2 (629 aa).

The Ku domain maps to 254-476 (SGLNRKTAVE…GHQIDELMEQ (223 aa)). Positions 608–620 (DLETLLKRGEQHS) are enriched in basic and acidic residues. Residues 608 to 629 (DLETLLKRGEQHSRGSPNNSNN) are disordered.

Belongs to the ku80 family. In terms of assembly, heterodimer of YKU70/HDF1 and YKU80/HDF2. Interacts with SIR4.

It localises to the nucleus. The protein resides in the chromosome. It is found in the telomere. The enzyme catalyses ATP + H2O = ADP + phosphate + H(+). Its function is as follows. Single-stranded DNA-dependent ATP-dependent helicase. Involved in non-homologous end joining (NHEJ) DNA double strand break repair. DNA-binding is sequence-independent but has a high affinity to nicks in double-stranded DNA and to the ends of duplex DNA. Binds to naturally occurring chromosomal ends, and therefore provides chromosomal end protection. Appears to have a role in recruitment of telomerase and CDC13 to the telomere and the subsequent telomere elongation. Required also for telomere recombination to repair telomeric ends in the absence of telomerase. KU70, of the KU70/KU80 heterodimer, binds to the stem loop of TLC1, the RNA component of telomerase. Involved in telomere maintenance. Interacts with telomeric repeats and subtelomeric sequences thereby controlling telomere length and protecting against subtelomeric rearrangement. Maintains telomeric chromatin, which is involved in silencing the expression of genes located at the telomere. Required for mating-type switching. The protein is ATP-dependent DNA helicase II subunit 2 (YKU80) of Saccharomyces cerevisiae (strain ATCC 204508 / S288c) (Baker's yeast).